A 396-amino-acid polypeptide reads, in one-letter code: Lipid-A-disaccharide synthase (396 aa).

It belongs to the LpxB family.

The catalysed reaction is a lipid X + a UDP-2-N,3-O-bis[(3R)-3-hydroxyacyl]-alpha-D-glucosamine = a lipid A disaccharide + UDP + H(+). It participates in bacterial outer membrane biogenesis; LPS lipid A biosynthesis. Its function is as follows. Condensation of UDP-2,3-diacylglucosamine and 2,3-diacylglucosamine-1-phosphate to form lipid A disaccharide, a precursor of lipid A, a phosphorylated glycolipid that anchors the lipopolysaccharide to the outer membrane of the cell. This is Lipid-A-disaccharide synthase from Rhodopseudomonas palustris (strain BisB18).